The chain runs to 1041 residues: Isoleucine--tRNA ligase (1041 aa).

Residues 53–63 (PFANGLPHYGH) carry the 'HIGH' region motif. The short motif at 619 to 623 (KMSKS) is the 'KMSKS' region element. Residue lysine 622 coordinates ATP.

Belongs to the class-I aminoacyl-tRNA synthetase family. IleS type 2 subfamily. Monomer. Zn(2+) serves as cofactor.

The protein localises to the cytoplasm. The catalysed reaction is tRNA(Ile) + L-isoleucine + ATP = L-isoleucyl-tRNA(Ile) + AMP + diphosphate. Functionally, catalyzes the attachment of isoleucine to tRNA(Ile). As IleRS can inadvertently accommodate and process structurally similar amino acids such as valine, to avoid such errors it has two additional distinct tRNA(Ile)-dependent editing activities. One activity is designated as 'pretransfer' editing and involves the hydrolysis of activated Val-AMP. The other activity is designated 'posttransfer' editing and involves deacylation of mischarged Val-tRNA(Ile). In Mycobacterium bovis (strain ATCC BAA-935 / AF2122/97), this protein is Isoleucine--tRNA ligase.